The sequence spans 138 residues: MLSPRKVKYRKKQRGRLSGEAQKGNKISFGEYGLVSLEADFITARQIEAARVAMTRRVKRGGKVWIRIFPDIPYTKKPAETRMGKGKGGVDHWNAPVKLGTVMFEISGVPRELAESAMMLASSKLPVKTTFVVRRDLR.

A compositionally biased stretch (basic residues) spans 1–15; sequence MLSPRKVKYRKKQRG. A disordered region spans residues 1–21; sequence MLSPRKVKYRKKQRGRLSGEA.

Belongs to the universal ribosomal protein uL16 family. As to quaternary structure, part of the 50S ribosomal subunit.

Its function is as follows. Binds 23S rRNA and is also seen to make contacts with the A and possibly P site tRNAs. The polypeptide is Large ribosomal subunit protein uL16 (Borrelia recurrentis (strain A1)).